Here is a 301-residue protein sequence, read N- to C-terminus: Phospholipase A1 VesT1.02 (301 aa).

6 disulfides stabilise this stretch: cysteine 87-cysteine 294, cysteine 176-cysteine 245, cysteine 181-cysteine 262, cysteine 219-cysteine 228, cysteine 240-cysteine 246, and cysteine 267-cysteine 269. The active-site Nucleophile is serine 137. The Charge relay system role is filled by aspartate 165. Histidine 230 (charge relay system) is an active-site residue.

This sequence belongs to the AB hydrolase superfamily. Lipase family. In terms of processing, is not glycosylated. As to expression, expressed by the venom gland.

It localises to the secreted. The catalysed reaction is a 1,2-diacyl-sn-glycero-3-phosphocholine + H2O = a 2-acyl-sn-glycero-3-phosphocholine + a fatty acid + H(+). In terms of biological role, catalyzes the hydrolysis of phosphatidylcholine with phospholipase A1 activity. Shows hemolytic activity. The chain is Phospholipase A1 VesT1.02 from Vespa tropica (Greater banded hornet).